A 587-amino-acid chain; its full sequence is MGRGGSRAACAAAAPPWHSLPDEVWEHAFSFLPAAADRGAAAGACSSWLRAERRSRRRLAVANCYAAAPRDAVERFPSVRAAEVKGKPHFADFGLVPPAWGAAAAPWIAAAADGWPLLEELSFKRMVVTDECLEMIAASFRNFQVLRLVSCDGFSTAGLAAIAAGCRHLRELDLQENEIEDCSIHWLSLFPESFTSLVTLNFSCLEGEVNITVLERLVTRCHNLKTLKLNNAIPLDKLASLLHKAPQLVELGTGKFSADYHSDLFAKLEAAFGGCKSLRRLSGAWDAVPDYLPAFYCVCEGLTSLNLSYATVRGPELIKFISRCRNLQQLWVMDLIEDHGLAVVASSCNKLQELRVFPSDPFGAGFLTERGLVDVSASCPMLESVLYFCRRMTNEALITIAKNRPNFTCFRLCILEPHTPDYITREPLDAGFSAIVESCRGLRRLSISGLLTDLVFKSIGAHADRLEMLSIAFAGNSDLGLHYILSGCKSLKKLEIRDCPFGDKPLLANAAKLETMRSLWMSSCLLTLGACRQLARKMPRLSVEIMNDPGRSCPLDSLPDETPVEKLYVYRTIAGPRSDTPACVQIV.

An F-box domain is found at 6-63; that stretch reads SRAACAAAAPPWHSLPDEVWEHAFSFLPAAADRGAAAGACSSWLRAERRSRRRLAVAN. Residue lysine 85 coordinates 1D-myo-inositol hexakisphosphate. The segment at 92–93 is interaction with auxin-responsive proteins; the sequence is DF. 1D-myo-inositol hexakisphosphate-binding positions include 124 to 125 and arginine 355; that span reads KR. The segment at 358 to 363 is interaction with auxin-responsive proteins; that stretch reads PSDPFG. 1D-myo-inositol hexakisphosphate is bound at residue 409–411; it reads CFR. Positions 413–417 are interaction with auxin-responsive proteins; the sequence is CILEP. Arginine 444 is a 1D-myo-inositol hexakisphosphate binding site. Residues 472–473 form an interaction with auxin-responsive proteins region; it reads AF. 1D-myo-inositol hexakisphosphate-binding positions include 492 to 493 and arginine 517; that span reads KK.

Part of a SCF (SKP1-cullin-F-box) protein ligase complex. May interact with auxin and auxin-responsive proteins.

It localises to the nucleus. It functions in the pathway protein modification; protein ubiquitination. The polypeptide is Transport inhibitor response 1-like protein Os05g0150500 (Oryza sativa subsp. japonica (Rice)).